Reading from the N-terminus, the 718-residue chain is MNPAEAKAVPISKEMEGPHPHSKKRHRRQDAKTEPEKSQSTKPPVDHEKKAQEGKPKEHTKPKSTHKHASDGEGKHGRNEKTASRSKEPVTPAKRTEPETKPQDTKPAGGKSVAAGTTAAPGKAGDPKKEKKSLPAAALAEPKPDEPSGKSGMDAALDDLIDTLGEPSETQEDSTAYTGPEISDPMSSTYIEELGKREVTIPPKYRELLEKKTGVAGPPPDSVTPLGPDDAIDALSSDFTCSSPVASGKEAGKEAAKSAGEVLEAESAKVMRAAAPPQEKKRKVEEDAMSDQALEALSASLGTRMAEPELDLSSIKEVAEAKRKEEKVEKCGEDDETVPAEYRLKPATDKDGKPLLPEPAEKPKPRSESELIDELSKDFSQAKSNEKQPKPTGKTEESKAAVPAPVAEAVPRTSMCSIQPVPPKPASLQKSTVPDDAVEALAGSLGRKEADPEEGKPVADKIKEKSKEEEREKLGEKEETIPPDYRLEEAKDKDGKPLLPSEPTAQLPALSEDLLLDALSEDFSGPSSASSLKFDDAMLSAAVSEVVSQSPASITRATAPPPDTRPSNKELDDALDKLSDSLGQRQPDPDENKPMEDKVKERAKKEHKDKLGERDDTIPPEYRHLLDQGEQDKPEKPPTKKSKEIKKPAGDQDPIDALSGDLDSCPPAAETSQATEKDKSKTTTASSSKAAKHGDKAKDSAQTTEETSKPKANEKNAS.

Disordered regions lie at residues 1-189 (MNPA…MSST) and 210-238 (EKKTGVAGPPPDSVTPLGPDDAIDALSSD). A compositionally biased stretch (basic residues) spans 20–29 (PHSKKRHRRQ). Basic and acidic residues-rich tracts occupy residues 30-61 (DAKTEPEKSQSTKPPVDHEKKAQEGKPKEHTK) and 68-104 (HASDGEGKHGRNEKTASRSKEPVTPAKRTEPETKPQD). Lys32 is covalently cross-linked (Glycyl lysine isopeptide (Lys-Gly) (interchain with G-Cter in SUMO2)). Position 49 is an N6-acetyllysine (Lys49). Ser86 is subject to Phosphoserine. The span at 114-124 (AAGTTAAPGKA) shows a compositional bias: low complexity. Phosphoserine is present on residues Ser133, Ser222, and Ser243. An Inhibitory domain 1 repeat occupies 170–222 (TQEDSTAYTGPEISDPMSSTYIEELGKREVTIPPKYRELLEKKTGVAGPPPDS). Disordered stretches follow at residues 266-291 (ESAKVMRAAAPPQEKKRKVEEDAMSD) and 320-509 (EAKR…QLPA). Residue Ser290 is modified to Blocked amino end (Ser); in form erythrocyte. The Inhibitory domain 2 repeat unit spans residues 307–359 (EPELDLSSIKEVAEAKRKEEKVEKCGEDDETVPAEYRLKPATDKDGKPLLPEP). Composition is skewed to basic and acidic residues over residues 320-331 (EAKRKEEKVEKC), 342-377 (YRLKPATDKDGKPLLPEPAEKPKPRSESELIDELSK), and 384-399 (SNEKQPKPTGKTEESK). Phosphoserine occurs at positions 367, 369, and 376. Positions 400 to 411 (AAVPAPVAEAVP) are enriched in low complexity. Ser444 carries the post-translational modification Phosphoserine. A compositionally biased stretch (basic and acidic residues) spans 446-496 (GRKEADPEEGKPVADKIKEKSKEEEREKLGEKEETIPPDYRLEEAKDKDGK). The stretch at 450–503 (ADPEEGKPVADKIKEKSKEEEREKLGEKEETIPPDYRLEEAKDKDGKPLLPSEP) is one Inhibitory domain 3 repeat. Phosphoserine occurs at positions 520, 531, 579, and 581. Positions 543 to 718 (VSEVVSQSPA…KPKANEKNAS (176 aa)) are disordered. The segment covering 566–579 (PSNKELDDALDKLS) has biased composition (basic and acidic residues). Residues 587–640 (PDPDENKPMEDKVKERAKKEHKDKLGERDDTIPPEYRHLLDQGEQDKPEKPPTK) form an Inhibitory domain 4 repeat. Basic and acidic residues-rich tracts occupy residues 587–650 (PDPD…KPAG) and 706–718 (ETSKPKANEKNAS).

The protein belongs to the protease inhibitor I27 (calpastatin) family.

Functionally, specific inhibition of calpain (calcium-dependent cysteine protease). Plays a key role in postmortem tenderization of meat and have been proposed to be involved in muscle protein degradation in living tissue. The protein is Calpastatin (CAST) of Oryctolagus cuniculus (Rabbit).